Here is a 301-residue protein sequence, read N- to C-terminus: Probable alpha-L-glutamate ligase (301 aa).

Residues 104–287 form the ATP-grasp domain; that stretch reads LQLLSRRGIG…VAGMIIEHLE (184 aa). ATP is bound by residues K141, 178–179, D187, and 211–213; these read EY and RSN. Mg(2+) contacts are provided by D248, E260, and N262. D248, E260, and N262 together coordinate Mn(2+).

This sequence belongs to the RimK family. The cofactor is Mg(2+). Mn(2+) serves as cofactor.

The chain is Probable alpha-L-glutamate ligase from Pseudomonas putida (strain ATCC 700007 / DSM 6899 / JCM 31910 / BCRC 17059 / LMG 24140 / F1).